Consider the following 69-residue polypeptide: Conotoxin reg3.6 (69 aa).

The N-terminal stretch at 1–20 is a signal peptide; it reads MMSKLGVLLTICLLLFPLSA. Residues 21-52 constitute a propeptide that is removed on maturation; that stretch reads LPLDGDQPADQPAERVQDISPDQNPLFHLVKR. Cystine bridges form between C54-C68, C55-C66, and C60-C69.

The protein belongs to the conotoxin M superfamily. Expressed by the venom duct.

Its subcellular location is the secreted. The chain is Conotoxin reg3.6 from Conus regius (Crown cone).